Reading from the N-terminus, the 88-residue chain is Small ribosomal subunit protein bS20 (88 aa).

It belongs to the bacterial ribosomal protein bS20 family.

Its function is as follows. Binds directly to 16S ribosomal RNA. This Bradyrhizobium diazoefficiens (strain JCM 10833 / BCRC 13528 / IAM 13628 / NBRC 14792 / USDA 110) protein is Small ribosomal subunit protein bS20.